A 128-amino-acid chain; its full sequence is uncharacterized protein (128 aa).

This is an uncharacterized protein from Borreliella burgdorferi (strain ATCC 35210 / DSM 4680 / CIP 102532 / B31) (Borrelia burgdorferi).